A 310-amino-acid chain; its full sequence is Probable manganese-dependent inorganic pyrophosphatase (310 aa).

Residues His-9, Asp-13, Asp-15, Asp-75, His-97, and Asp-149 each coordinate Mn(2+).

Belongs to the PPase class C family. The cofactor is Mn(2+).

The protein resides in the cytoplasm. It carries out the reaction diphosphate + H2O = 2 phosphate + H(+). In Bacillus cytotoxicus (strain DSM 22905 / CIP 110041 / 391-98 / NVH 391-98), this protein is Probable manganese-dependent inorganic pyrophosphatase.